A 464-amino-acid chain; its full sequence is ATP synthase subunit beta (464 aa).

153–160 serves as a coordination point for ATP; the sequence is GGAGVGKT.

This sequence belongs to the ATPase alpha/beta chains family. As to quaternary structure, F-type ATPases have 2 components, CF(1) - the catalytic core - and CF(0) - the membrane proton channel. CF(1) has five subunits: alpha(3), beta(3), gamma(1), delta(1), epsilon(1). CF(0) has three main subunits: a(1), b(2) and c(9-12). The alpha and beta chains form an alternating ring which encloses part of the gamma chain. CF(1) is attached to CF(0) by a central stalk formed by the gamma and epsilon chains, while a peripheral stalk is formed by the delta and b chains.

It localises to the cell membrane. It carries out the reaction ATP + H2O + 4 H(+)(in) = ADP + phosphate + 5 H(+)(out). In terms of biological role, produces ATP from ADP in the presence of a proton gradient across the membrane. The catalytic sites are hosted primarily by the beta subunits. The protein is ATP synthase subunit beta of Alkaliphilus oremlandii (strain OhILAs) (Clostridium oremlandii (strain OhILAs)).